The following is a 313-amino-acid chain: Putative olfactory receptor 2B3 (313 aa).

The Extracellular portion of the chain corresponds to 1–25 (MNWENESSPKEFILLGFSDRAWLQM). Asparagine 5 carries an N-linked (GlcNAc...) asparagine glycan. Residues 26 to 49 (PLFVVLLISYTITIFGNVSIMMVC) form a helical membrane-spanning segment. Residues 50–57 (ILDPKLHT) lie on the Cytoplasmic side of the membrane. The helical transmembrane segment at 58–79 (PMYFFLTNLSILDLCYTTTTVP) threads the bilayer. At 80-100 (HMLVNIGCNKKTISYAGCVAH) the chain is on the extracellular side. Cysteine 97 and cysteine 189 are disulfide-bonded. The helical transmembrane segment at 101-120 (LIIFLALGATECLLLAVMSF) threads the bilayer. At 121–139 (DRYVAVCRPLHYVVIMNYW) the chain is on the cytoplasmic side. Residues 140 to 158 (FCLRMAAFSWLIGFGNSVL) form a helical membrane-spanning segment. At 159–195 (QSSLTLNMPRCGHQEVDHFFCEVPALLKLSCADTKPI) the chain is on the extracellular side. A helical membrane pass occupies residues 196–219 (EAELFFFSVLILLIPVTLILISYG). Topologically, residues 220-236 (FIAQAVLKIRSAEGRQK) are cytoplasmic. The helical transmembrane segment at 237-259 (AFGTCGSHMIVVSLFYGTAIYMY) threads the bilayer. The Extracellular segment spans residues 260–272 (LQPPSSTSKDWGK). Residues 273–292 (MVSLFYGIITSMLNSLIYSL) form a helical membrane-spanning segment. At 293–313 (RNKDMKEAFKRLMPRIFFCKK) the chain is on the cytoplasmic side.

The protein belongs to the G-protein coupled receptor 1 family.

The protein resides in the cell membrane. Odorant receptor. The polypeptide is Putative olfactory receptor 2B3 (OR2B3) (Homo sapiens (Human)).